Reading from the N-terminus, the 270-residue chain is 3-methyl-2-oxobutanoate hydroxymethyltransferase (270 aa).

Mg(2+)-binding residues include D43 and D82. Residues 43-44 (DS), D82, and K112 each bind 3-methyl-2-oxobutanoate. A Mg(2+)-binding site is contributed by E114. E179 serves as the catalytic Proton acceptor.

This sequence belongs to the PanB family. Homodecamer; pentamer of dimers. Mg(2+) is required as a cofactor.

The protein localises to the cytoplasm. It catalyses the reaction 3-methyl-2-oxobutanoate + (6R)-5,10-methylene-5,6,7,8-tetrahydrofolate + H2O = 2-dehydropantoate + (6S)-5,6,7,8-tetrahydrofolate. It participates in cofactor biosynthesis; (R)-pantothenate biosynthesis; (R)-pantoate from 3-methyl-2-oxobutanoate: step 1/2. Functionally, catalyzes the reversible reaction in which hydroxymethyl group from 5,10-methylenetetrahydrofolate is transferred onto alpha-ketoisovalerate to form ketopantoate. The polypeptide is 3-methyl-2-oxobutanoate hydroxymethyltransferase (Staphylococcus saprophyticus subsp. saprophyticus (strain ATCC 15305 / DSM 20229 / NCIMB 8711 / NCTC 7292 / S-41)).